We begin with the raw amino-acid sequence, 389 residues long: Spore coat polysaccharide biosynthesis protein SpsC (389 aa).

Residue Lys187 is modified to N6-(pyridoxal phosphate)lysine.

This sequence belongs to the DegT/DnrJ/EryC1 family. It depends on pyridoxal 5'-phosphate as a cofactor.

The protein operates within spore coat biogenesis; spore coat polysaccharide biosynthesis. This Bacillus subtilis (strain 168) protein is Spore coat polysaccharide biosynthesis protein SpsC (spsC).